The following is an 875-amino-acid chain: GATOR2 complex protein MIOS (875 aa).

6 WD repeats span residues 61 to 100 (PYMK…NSKF), 111 to 155 (KHAR…TPDI), 182 to 221 (GQND…QKMF), 223 to 261 (NTKA…KPVL), 265 to 306 (EQPK…TPIG), and 395 to 437 (RLRA…KQYT). The segment at 735-781 (VSCNFCGKSISYSCSAVPHQGRGFSQYGVSGSPTKSKVTSCPGCRKP) adopts a C4-type zinc-finger fold. Residues cysteine 737 and cysteine 740 each coordinate Zn(2+). Residues serine 759 and serine 766 each carry the phosphoserine modification. Positions 775, 778, 788, 827, 830, 832, 835, 838, 849, 854, and 858 each coordinate Zn(2+). The RING-type; atypical zinc finger occupies 782–863 (LPRCALCLIN…CTCKCMQLDT (82 aa)).

Belongs to the WD repeat mio family. In terms of assembly, component of the GATOR2 subcomplex, composed of MIOS, SEC13, SEH1L, WDR24 and WDR59. The GATOR2 complex interacts with CASTOR1 and CASTOR2; the interaction is negatively regulated by arginine. CASTOR1 and CASTOR2 convey leucine availability via direct interaction with MIOS. The GATOR2 complex interacts with SESN1, SESN2 and SESN3; the interaction is negatively regulated by amino acids. Interacts with SAR1A and SAR1B; the interaction is direct, disrupted by leucine and mediates the interaction of SAR1A or SAR1B with the GATOR2 complex to negatively regulate the TORC1 signaling upon leucine deprivation.

The protein localises to the lysosome membrane. Its activity is regulated as follows. The GATOR2 complex is negatively regulated by the upstream amino acid sensors CASTOR1 and SESN2, which sequester the GATOR2 complex in absence of amino acids. In the presence of abundant amino acids, GATOR2 is released from CASTOR1 and SESN2 and activated. Functionally, as a component of the GATOR2 complex, functions as an activator of the amino acid-sensing branch of the mTORC1 signaling pathway. The GATOR2 complex indirectly activates mTORC1 through the inhibition of the GATOR1 subcomplex. GATOR2 probably acts as an E3 ubiquitin-protein ligase toward GATOR1. In the presence of abundant amino acids, the GATOR2 complex mediates ubiquitination of the NPRL2 core component of the GATOR1 complex, leading to GATOR1 inactivation. In the absence of amino acids, GATOR2 is inhibited, activating the GATOR1 complex. Within the GATOR2 complex, MIOS is required to prevent autoubiquitination of WDR24, the catalytic subunit of the complex. The GATOR2 complex is required for brain myelination. The chain is GATOR2 complex protein MIOS from Pongo abelii (Sumatran orangutan).